The following is a 417-amino-acid chain: D-amino acid dehydrogenase (417 aa).

3 to 17 (VVILGSGVVGVSTAW) is an FAD binding site.

It belongs to the DadA oxidoreductase family. FAD is required as a cofactor.

It carries out the reaction a D-alpha-amino acid + A + H2O = a 2-oxocarboxylate + AH2 + NH4(+). It participates in amino-acid degradation; D-alanine degradation; NH(3) and pyruvate from D-alanine: step 1/1. Its function is as follows. Oxidative deamination of D-amino acids. This chain is D-amino acid dehydrogenase, found in Pectobacterium carotovorum subsp. carotovorum (strain PC1).